We begin with the raw amino-acid sequence, 407 residues long: Inhibin beta B chain (407 aa).

Positions 1 to 28 (MDGLPGRALGAACLLLLAAGWLGPEAWG) are cleaved as a signal peptide. The disordered stretch occupies residues 26–62 (AWGSPTPPPTPAAPPPPPPPGSPGGSQDTCTSCGGFR). Residues 29–292 (SPTPPPTPAA…GDSRHRIRKR (264 aa)) constitute a propeptide that is removed on maturation. The span at 30 to 47 (PTPPPTPAAPPPPPPPGS) shows a compositional bias: pro residues. N-linked (GlcNAc...) asparagine glycosylation is present at asparagine 93. 4 disulfides stabilise this stretch: cysteine 296-cysteine 304, cysteine 303-cysteine 372, cysteine 332-cysteine 404, and cysteine 336-cysteine 406.

This sequence belongs to the TGF-beta family. As to quaternary structure, dimeric, linked by one or more disulfide bonds. Inhibin B is a dimer of alpha and beta-B. Activin B is a homodimer of beta-B. Activin AB is a dimer of beta-A and beta-B. Interacts with FST and FSTL3. Activin B interacts with BMPR2.

The protein resides in the secreted. In terms of biological role, inhibins and activins inhibit and activate, respectively, the secretion of follitropin by the pituitary gland. Inhibins/activins are involved in regulating a number of diverse functions such as hypothalamic and pituitary hormone secretion, gonadal hormone secretion, germ cell development and maturation, erythroid differentiation, insulin secretion, nerve cell survival, embryonic axial development or bone growth, depending on their subunit composition. Inhibins appear to oppose the functions of activins. Activin B is a dimer of alpha and beta-B that plays a role in several essential biological processes including embryonic development, stem cell maintenance and differentiation, haematopoiesis, cell proliferation and wound healing. Signals through type I receptor ACVR1C, abundantly expressed in pancreatic beta cells, and type II receptors like ACVR2A or BMPR2. Upon ligand binding, these receptors phosphorylate intracellular signaling mediators SMAD2 and SMAD3, which form a complex with SMAD4, translocate to the nucleus, and regulate gene expression. Plays a crucial role in the induction of hepcidin by inflammation through activation of ACVR1C and subsequent phosphorylation of SMAD1/5/8. Regulates adipocyte lipid metabolism by decreasing non-esterified fatty acids and glycerol release and increases intracellular triglyceride content. Stimulates wound healing by promoting cell migration and hair follicle regeneration through the JNK and ERK signaling pathways downstream of RHOA. Its function is as follows. Inhibin B is a dimer of alpha and beta-B that plays a crucial role in the regulation of the reproductive system by inhibiting the secretion of follicle-stimulating hormone (FSH) from the anterior pituitary gland. Thereby, maintains reproductive homeostasis in both males and females. Acts as a more potent suppressor of FSH release than inhibin A. Functions as competitive receptor antagonist binding activin type II receptors with high affinity in the presence of the TGF-beta type III coreceptor/TGFBR3L. The chain is Inhibin beta B chain (INHBB) from Homo sapiens (Human).